We begin with the raw amino-acid sequence, 274 residues long: MTQASLIRLSELNNDAQYNLNDTSMYNPVGAAAYGVNGDKIGTVRDALVEPETGRIRYFLVDVGGWFSSKEVLVPVGYGRVDDSGVYFDSLTKDQVKDMSEYRADQAYSSEMMDTDERVLRGNQSQEEYHQRAYQTPDRLQLLEERLVVNKDRFKAGSVQIGKRIETRQETVSVPLQREEVVIERHAVTDGRAVEGAVLGEGHQTMSVDLEAERANISKQAYVTEEVSVGKRAVTETQQVTETVGREVLDVNQTGDVRTTEGTALTDDTTKRNI.

The tract at residues 253–274 (QTGDVRTTEGTALTDDTTKRNI) is disordered.

This is an uncharacterized protein from Deinococcus radiodurans (strain ATCC 13939 / DSM 20539 / JCM 16871 / CCUG 27074 / LMG 4051 / NBRC 15346 / NCIMB 9279 / VKM B-1422 / R1).